The primary structure comprises 238 residues: N-terminal acetyltransferase A complex catalytic subunit ARD1 (238 aa).

Residues 35–195 (YHILSWPEAS…DAYAMKKVLK (161 aa)) enclose the N-acetyltransferase domain.

The protein belongs to the acetyltransferase family. ARD1 subfamily. In terms of assembly, component of the N-terminal acetyltransferase A (NatA) complex, which is composed of ARD1, NAT1 and NAT5. Can self-associate.

The protein localises to the cytoplasm. The catalysed reaction is N-terminal glycyl-[protein] + acetyl-CoA = N-terminal N(alpha)-acetylglycyl-[protein] + CoA + H(+). It catalyses the reaction N-terminal L-alanyl-[protein] + acetyl-CoA = N-terminal N(alpha)-acetyl-L-alanyl-[protein] + CoA + H(+). It carries out the reaction N-terminal L-seryl-[protein] + acetyl-CoA = N-terminal N(alpha)-acetyl-L-seryl-[protein] + CoA + H(+). The enzyme catalyses N-terminal L-valyl-[protein] + acetyl-CoA = N-terminal N(alpha)-acetyl-L-valyl-[protein] + CoA + H(+). The catalysed reaction is N-terminal L-cysteinyl-[protein] + acetyl-CoA = N-terminal N(alpha)-acetyl-L-cysteinyl-[protein] + CoA + H(+). It catalyses the reaction N-terminal L-threonyl-[protein] + acetyl-CoA = N-terminal N(alpha)-acetyl-L-threonyl-[protein] + CoA + H(+). In terms of biological role, catalytic component of the NatA N-terminal acetyltransferase, which catalyzes acetylation of proteins beginning with Met-Ser, Met-Gly and Met-Ala. N-acetylation plays a role in normal eukaryotic translation and processing, protect against proteolytic degradation and protein turnover. This is N-terminal acetyltransferase A complex catalytic subunit ARD1 (ARD1) from Saccharomyces cerevisiae (strain ATCC 204508 / S288c) (Baker's yeast).